We begin with the raw amino-acid sequence, 62 residues long: Small ribosomal subunit protein bS21C (62 aa).

The disordered stretch occupies residues 43-62 (EKSKRKKLALHKQSKRRFRT). A compositionally biased stretch (basic residues) spans 45-62 (SKRKKLALHKQSKRRFRT).

The protein belongs to the bacterial ribosomal protein bS21 family.

The chain is Small ribosomal subunit protein bS21C from Trichormus variabilis (strain ATCC 29413 / PCC 7937) (Anabaena variabilis).